Reading from the N-terminus, the 270-residue chain is Putative pyruvate, phosphate dikinase regulatory protein (270 aa).

G148–T155 contacts ADP.

Belongs to the pyruvate, phosphate/water dikinase regulatory protein family. PDRP subfamily.

It catalyses the reaction N(tele)-phospho-L-histidyl/L-threonyl-[pyruvate, phosphate dikinase] + ADP = N(tele)-phospho-L-histidyl/O-phospho-L-threonyl-[pyruvate, phosphate dikinase] + AMP + H(+). The enzyme catalyses N(tele)-phospho-L-histidyl/O-phospho-L-threonyl-[pyruvate, phosphate dikinase] + phosphate + H(+) = N(tele)-phospho-L-histidyl/L-threonyl-[pyruvate, phosphate dikinase] + diphosphate. Its function is as follows. Bifunctional serine/threonine kinase and phosphorylase involved in the regulation of the pyruvate, phosphate dikinase (PPDK) by catalyzing its phosphorylation/dephosphorylation. This chain is Putative pyruvate, phosphate dikinase regulatory protein, found in Bacillus cytotoxicus (strain DSM 22905 / CIP 110041 / 391-98 / NVH 391-98).